We begin with the raw amino-acid sequence, 159 residues long: Cytochrome P450 monooxygenase aunB (159 aa).

Cys-134 lines the heme pocket.

This sequence belongs to the cytochrome P450 family. The cofactor is heme.

The catalysed reaction is 2 fonsecin B + NADPH + O2 + H(+) = aurasperone B + NADP(+) + 2 H2O. The enzyme catalyses 2 rubrofusarin B + NADPH + O2 + H(+) = aurasperone A + NADP(+) + 2 H2O. It functions in the pathway secondary metabolite biosynthesis. Its function is as follows. Cytochrome P450 monooxygenase; part of the gene cluster that mediates the biosynthesis of aurasperone B, a dimeric gamma-naphthopyrone. The first step in the biosynthesis of aurasperone B is the production of gamma-naphthopyrone precursor YWA1 by the non-reducing polyketide synthase albA, via condensation of one acetyl-CoA starter unit with 6 malonyl-CoA units. YWA1 is then methylated by aunE at position C-6 to yield foncesin which is further methylated at position C-8 by aunD to produce fonsecin B. A key enzyme in the biosynthetic pathway is the cytochrome P450 monooxygenase aunB which catalyzes the oxidative dimerization of fonsecin B to aurasperone B. AunB also catalyzes the oxidative dimerization of rubrofusarin B into aurasperone A. The chain is Cytochrome P450 monooxygenase aunB from Aspergillus niger (strain ATCC 1015 / CBS 113.46 / FGSC A1144 / LSHB Ac4 / NCTC 3858a / NRRL 328 / USDA 3528.7).